The primary structure comprises 947 residues: MTPLSSPLSQYWQTVVERLPEGFTETSLSVQAKSVLTFSDFALDSVIAHPEWLAELESASPQADEWRHYAGWLQEALAGVCDDASLMRELRLFRRRIMVRIAWAQTLSLVDDETILQQLSHLAETLIVGARDWLYAACCREWGTPCNPQGVPQPLLILGMGKLGGGELNFSSDIDLIFAWPEHGETRGGRRELDNAQFFTRLGQRLIKALDQPTMDGFVYRVDMRLRPFGDSGPLVLSFAALEDYYQEQGRDWERYAMVKARLMGDNDDAWSRELRAMLRPFVFRRYIDFSVIQSLRNMKGMIAREVRRRGLKDNIKLGAGGIREIEFIVQVFQLIRGGREPSLQSRSLLPTLDAIAALHLLPENDVAQLRVAYLFLRRLENLLQSINDEQTQTLPADDLNRARLAWGMKAENWPQLVGELTDHMANVRRVFNELIGDDEADTPQEEERSEPWREVWQDALQEDDSTPVLAHLADEDRRQVLTLIADFRKELDKRPIGPRGRQVLDQLMPHLLADVCSREDAAVTLSRITPLLAGIVTRTTYLELLSEFPGALKHLIMLCAASPMIASQLARYPLLLDELLDPGTLYQPTATDAYRDELRQYLLRVPEEDEEQQLEALRQFKQAQLLRIAAADIAGTLPVMKVSDHLTWLAEAMIDAVVQQAWTQMVARYGQPAHLDERQGRGFAVVGYGKLGGWELGYSSDLDLIFLHDCPMDVMTNGEREIDGRQFYLRLAQRIMHLFSTRTSSGILYEVDARLRPSGAAGMLVTSADAFADYQQHEAWTWEHQALVRARVVYGDPQLTSQFDTVRRTIMTTARDGKTLQTEVREMREKMRAHLGNKHRDRFDIKADEGGITDIEFIAQYLVLRYAHEKPKLTRWSDNVRILELLAQNGIMDEHEAQALTVAYTTLRDELHHLALQELPGHVAQTCFSKERALVQASWRKWLVAV.

The adenylyl removase stretch occupies residues M1–E440. The segment at S450–V947 is adenylyl transferase.

It belongs to the GlnE family. Mg(2+) serves as cofactor.

The catalysed reaction is [glutamine synthetase]-O(4)-(5'-adenylyl)-L-tyrosine + phosphate = [glutamine synthetase]-L-tyrosine + ADP. It catalyses the reaction [glutamine synthetase]-L-tyrosine + ATP = [glutamine synthetase]-O(4)-(5'-adenylyl)-L-tyrosine + diphosphate. In terms of biological role, involved in the regulation of glutamine synthetase GlnA, a key enzyme in the process to assimilate ammonia. When cellular nitrogen levels are high, the C-terminal adenylyl transferase (AT) inactivates GlnA by covalent transfer of an adenylyl group from ATP to specific tyrosine residue of GlnA, thus reducing its activity. Conversely, when nitrogen levels are low, the N-terminal adenylyl removase (AR) activates GlnA by removing the adenylyl group by phosphorolysis, increasing its activity. The regulatory region of GlnE binds the signal transduction protein PII (GlnB) which indicates the nitrogen status of the cell. The sequence is that of Bifunctional glutamine synthetase adenylyltransferase/adenylyl-removing enzyme from Salmonella agona (strain SL483).